The chain runs to 128 residues: Large ribosomal subunit protein mL51 (128 aa).

The transit peptide at 1–31 (MAGSVPWAASRRLWGWVPSACRSFSLGVPRL) directs the protein to the mitochondrion.

Belongs to the mitochondrion-specific ribosomal protein mL51 family. In terms of assembly, component of the mitochondrial ribosome large subunit (39S) which comprises a 16S rRNA and about 50 distinct proteins. Interacts with OXA1L.

It localises to the mitochondrion. The chain is Large ribosomal subunit protein mL51 (Mrpl51) from Mus musculus (Mouse).